A 349-amino-acid chain; its full sequence is UPF0324 inner membrane protein YeiH (349 aa).

The Periplasmic portion of the chain corresponds to 1-12; the sequence is MTELTLQNHRRT. Residues 13–35 traverse the membrane as a helical segment; it reads MWHFIPGLALSAVITGVALWGGA. Over 36-38 the chain is Cytoplasmic; that stretch reads IPA. A helical transmembrane segment spans residues 39 to 61; it reads VAGAGFSALTLAILLGMVIGNTV. Topologically, residues 62–99 are periplasmic; that stretch reads YPQIWKQCDGGVLFAKQHLLRLGIILYGFRLTFSQIAD. The helical transmembrane segment at 100 to 122 threads the bilayer; the sequence is VGISGIVIDVLTLSSTFMLACFL. The Cytoplasmic segment spans residues 123–131; that stretch reads GQKVFGLDR. Residues 132 to 151 traverse the membrane as a helical segment; the sequence is HTSWLIGAGSSICGAAAVLA. The Periplasmic portion of the chain corresponds to 152 to 162; it reads TEPVVKAEASK. Residues 163–185 traverse the membrane as a helical segment; the sequence is VTVAVATVVIFGTIAIFLYPAMY. At 186–261 the chain is on the cytoplasmic side; that stretch reads PLLAHWFSPE…SPATGAEKSK (76 aa). The chain crosses the membrane as a helical span at residues 262–284; it reads ITIPWFAIFFIVVAIFNSFHLLP. The Periplasmic portion of the chain corresponds to 285-290; it reads KAVVDM. The chain crosses the membrane as a helical span at residues 291–313; that stretch reads LVTLDTVLLAMAMAALGLTTHVS. The Cytoplasmic portion of the chain corresponds to 314–322; it reads ALKKAGAKP. Residues 323–345 form a helical membrane-spanning segment; it reads LLMALALFAWLIIGGGAINVLIH. Topologically, residues 346-349 are periplasmic; that stretch reads SLIA.

It belongs to the UPF0324 family.

It is found in the cell inner membrane. This Salmonella typhi protein is UPF0324 inner membrane protein YeiH (yeiH).